A 1044-amino-acid polypeptide reads, in one-letter code: GRB10-interacting GYF protein 1 (1044 aa).

A phosphoserine mark is found at S24, S28, S137, and S157. Disordered regions lie at residues 104–290 and 306–424; these read GKGA…DGLP and ASGA…LEDE. Composition is skewed to basic and acidic residues over residues 148-179 and 186-203; these read NPRE…RSGF and PRKE…SLRE. At S228 the chain carries Phosphoserine. Basic and acidic residues-rich tracts occupy residues 237–265 and 316–332; these read GWRE…EDGR and GPKE…FRGL. A compositionally biased stretch (acidic residues) spans 333-350; the sequence is EEEEEEEEEPSEGVDEER. The residue at position 343 (S343) is a Phosphoserine. Residues 366-379 show a composition bias toward low complexity; sequence NSSSPSSLPALGPL. Residues 389-403 are compositionally biased toward basic and acidic residues; sequence AVEKELPPAEGDELR. S408 bears the Phosphoserine mark. The region spanning 476-524 is the GYF domain; that stretch reads ARKWFYKDPQGEIQGPFTTQEMAEWFQAGYFSMSLLVKRGCDEGFQPLG. S540 and S634 each carry phosphoserine. The span at 692–706 shows a compositional bias: basic and acidic residues; it reads KREEEERKRREEKRR. Disordered regions lie at residues 692 to 721, 820 to 842, 855 to 883, 966 to 987, 1000 to 1019, and 1024 to 1044; these read KREE…RQEE, EAGP…LGLW, SLGL…RKKT, QKAS…QEAW, NHST…RALM, and PSIL…VDDY. Residues 829-839 show a composition bias toward gly residues; that stretch reads DKSGGSSGGNL. Composition is skewed to low complexity over residues 855–877 and 970–984; these read SLGL…LSGR and QQRQ…QQQQ. Residue S863 is modified to Phosphoserine.

It belongs to the GIGYF family. As to quaternary structure, interacts with GRB10. This transient binding is increased under IGF1 stimulation and leads to recruitment of GIGYF1/GRB10 complex to IGF1 receptor. Interacts with DDX6. As to expression, ubiquitous. Lower expression in skeletal muscle, liver and testis.

In terms of biological role, may act cooperatively with GRB10 to regulate tyrosine kinase receptor signaling. May increase IGF1 receptor phosphorylation under IGF1 stimulation as well as phosphorylation of IRS1 and SHC1. This Mus musculus (Mouse) protein is GRB10-interacting GYF protein 1 (Gigyf1).